Consider the following 75-residue polypeptide: Dermaseptin-A3 (75 aa).

A signal peptide spans 1-22; that stretch reads MAFLKKSLFLVLLLGLISLSIC. A propeptide spanning residues 23–43 is cleaved from the precursor; sequence EEEKRENEVEEEQEDDEQSEL. Glutamine 72 carries the post-translational modification Glutamine amide. Positions 74–75 are excised as a propeptide; that stretch reads EQ.

It belongs to the frog skin active peptide (FSAP) family. Dermaseptin subfamily. As to expression, expressed by the skin glands.

The protein resides in the secreted. In terms of biological role, possesses a potent antimicrobial activity against Gram-positive and Gram-negative bacteria. Probably acts by disturbing membrane functions with its amphipathic structure. This is Dermaseptin-A3 from Agalychnis annae (Blue-sided leaf frog).